The following is a 254-amino-acid chain: Small ribosomal subunit protein uS2 (254 aa).

It belongs to the universal ribosomal protein uS2 family.

The protein is Small ribosomal subunit protein uS2 of Legionella pneumophila (strain Corby).